Reading from the N-terminus, the 704-residue chain is Elongation factor G (704 aa).

Residues 8–291 enclose the tr-type G domain; sequence DKVRNIGIMA…AVVDYLASPL (284 aa). GTP contacts are provided by residues 17–24, 90–94, and 144–147; these read AHIDAGKT, DTPGH, and NKMD.

Belongs to the TRAFAC class translation factor GTPase superfamily. Classic translation factor GTPase family. EF-G/EF-2 subfamily.

Its subcellular location is the cytoplasm. Functionally, catalyzes the GTP-dependent ribosomal translocation step during translation elongation. During this step, the ribosome changes from the pre-translocational (PRE) to the post-translocational (POST) state as the newly formed A-site-bound peptidyl-tRNA and P-site-bound deacylated tRNA move to the P and E sites, respectively. Catalyzes the coordinated movement of the two tRNA molecules, the mRNA and conformational changes in the ribosome. The chain is Elongation factor G from Chlorobium luteolum (strain DSM 273 / BCRC 81028 / 2530) (Pelodictyon luteolum).